We begin with the raw amino-acid sequence, 434 residues long: CinA-like protein (434 aa).

The protein belongs to the CinA family.

The sequence is that of CinA-like protein from Mycolicibacterium paratuberculosis (strain ATCC BAA-968 / K-10) (Mycobacterium paratuberculosis).